We begin with the raw amino-acid sequence, 419 residues long: Ribosome biogenesis protein NOP53 (419 aa).

Disordered stretches follow at residues 1–21 (MGIKERNAPSQYKQSSRKNKR) and 233–283 (KAFE…KIRQ). Basic and acidic residues predominate over residues 233–261 (KAFEDKGLVSDQDVNHSIDSDDQSEHEQA). Ser-242, Ser-249, Ser-252, and Ser-256 each carry phosphoserine. Residues 269–283 (KNKRKTRSQRNKIRQ) are compositionally biased toward basic residues.

It belongs to the NOP53 family.

The protein localises to the nucleus. It localises to the nucleolus. Its subcellular location is the nucleoplasm. Functionally, may play a role in ribosome biogenesis. The polypeptide is Ribosome biogenesis protein NOP53 (Schizosaccharomyces pombe (strain 972 / ATCC 24843) (Fission yeast)).